A 494-amino-acid polypeptide reads, in one-letter code: tRNA-2-methylthio-N(6)-dimethylallyladenosine synthase (494 aa).

One can recognise an MTTase N-terminal domain in the interval 5–121 (RTYQVRTYGC…LPALLERARV (117 aa)). Residues C14, C50, C84, C158, C162, and C165 each contribute to the [4Fe-4S] cluster site. A Radical SAM core domain is found at 144–374 (RESVYAAWVA…LELQERISEE (231 aa)). A TRAM domain is found at 377 to 446 (AKFVGREVEV…PHHLVADSGI (70 aa)). The segment covering 458-468 (WEARNAPERRP) has biased composition (basic and acidic residues). Residues 458–494 (WEARNAPERRPTGVLLGMPKVGAPEPQPSVVGGCCDS) are disordered.

Belongs to the methylthiotransferase family. MiaB subfamily. Monomer. Requires [4Fe-4S] cluster as cofactor.

It is found in the cytoplasm. It catalyses the reaction N(6)-dimethylallyladenosine(37) in tRNA + (sulfur carrier)-SH + AH2 + 2 S-adenosyl-L-methionine = 2-methylsulfanyl-N(6)-dimethylallyladenosine(37) in tRNA + (sulfur carrier)-H + 5'-deoxyadenosine + L-methionine + A + S-adenosyl-L-homocysteine + 2 H(+). Functionally, catalyzes the methylthiolation of N6-(dimethylallyl)adenosine (i(6)A), leading to the formation of 2-methylthio-N6-(dimethylallyl)adenosine (ms(2)i(6)A) at position 37 in tRNAs that read codons beginning with uridine. This Thermobifida fusca (strain YX) protein is tRNA-2-methylthio-N(6)-dimethylallyladenosine synthase.